The following is a 164-amino-acid chain: ATP synthase B' chain, cyanelle (164 aa).

The helical transmembrane segment at 26 to 46 threads the bilayer; sequence ATLPVMMVQLLVLMLILNAVF.

Belongs to the ATPase B chain family. As to quaternary structure, F-type ATPases have 2 components, F(1) - the catalytic core - and F(0) - the membrane proton channel. F(1) has five subunits: alpha(3), beta(3), gamma(1), delta(1), epsilon(1). F(0) has four main subunits: a(1), b(1), b'(1) and c(10-14). The alpha and beta chains form an alternating ring which encloses part of the gamma chain. F(1) is attached to F(0) by a central stalk formed by the gamma and epsilon chains, while a peripheral stalk is formed by the delta, b and b' chains.

It is found in the plastid. The protein resides in the cyanelle thylakoid membrane. Its function is as follows. F(1)F(0) ATP synthase produces ATP from ADP in the presence of a proton or sodium gradient. F-type ATPases consist of two structural domains, F(1) containing the extramembraneous catalytic core and F(0) containing the membrane proton channel, linked together by a central stalk and a peripheral stalk. During catalysis, ATP synthesis in the catalytic domain of F(1) is coupled via a rotary mechanism of the central stalk subunits to proton translocation. Component of the F(0) channel, it forms part of the peripheral stalk, linking F(1) to F(0). The b'-subunit is a diverged and duplicated form of b found in plants and photosynthetic bacteria. This is ATP synthase B' chain, cyanelle from Cyanophora paradoxa.